Reading from the N-terminus, the 332-residue chain is Biotin synthase (332 aa).

One can recognise a Radical SAM core domain in the interval 53–282 (YFGKKVKLNM…SKEIRISGGR (230 aa)). 3 residues coordinate [4Fe-4S] cluster: Cys71, Cys75, and Cys78. The [2Fe-2S] cluster site is built by Cys115, Cys147, Cys207, and Arg277.

The protein belongs to the radical SAM superfamily. Biotin synthase family. In terms of assembly, homodimer. The cofactor is [4Fe-4S] cluster. [2Fe-2S] cluster is required as a cofactor.

It carries out the reaction (4R,5S)-dethiobiotin + (sulfur carrier)-SH + 2 reduced [2Fe-2S]-[ferredoxin] + 2 S-adenosyl-L-methionine = (sulfur carrier)-H + biotin + 2 5'-deoxyadenosine + 2 L-methionine + 2 oxidized [2Fe-2S]-[ferredoxin]. It participates in cofactor biosynthesis; biotin biosynthesis; biotin from 7,8-diaminononanoate: step 2/2. In terms of biological role, catalyzes the conversion of dethiobiotin (DTB) to biotin by the insertion of a sulfur atom into dethiobiotin via a radical-based mechanism. This is Biotin synthase from Bacillus cytotoxicus (strain DSM 22905 / CIP 110041 / 391-98 / NVH 391-98).